Consider the following 201-residue polypeptide: Pyridoxal 5'-phosphate synthase subunit PdxT (201 aa).

49–51 serves as a coordination point for L-glutamine; the sequence is GES. Catalysis depends on cysteine 81, which acts as the Nucleophile. Residues arginine 110 and 139–140 contribute to the L-glutamine site; that span reads IR. Catalysis depends on charge relay system residues histidine 180 and glutamate 182.

It belongs to the glutaminase PdxT/SNO family. In the presence of PdxS, forms a dodecamer of heterodimers. Only shows activity in the heterodimer.

The enzyme catalyses aldehydo-D-ribose 5-phosphate + D-glyceraldehyde 3-phosphate + L-glutamine = pyridoxal 5'-phosphate + L-glutamate + phosphate + 3 H2O + H(+). The catalysed reaction is L-glutamine + H2O = L-glutamate + NH4(+). It functions in the pathway cofactor biosynthesis; pyridoxal 5'-phosphate biosynthesis. In terms of biological role, catalyzes the hydrolysis of glutamine to glutamate and ammonia as part of the biosynthesis of pyridoxal 5'-phosphate. The resulting ammonia molecule is channeled to the active site of PdxS. The chain is Pyridoxal 5'-phosphate synthase subunit PdxT from Salinispora tropica (strain ATCC BAA-916 / DSM 44818 / JCM 13857 / NBRC 105044 / CNB-440).